Consider the following 1793-residue polypeptide: Non-reducing polyketide synthase adaA (1793 aa).

Positions 16-250 (NDDLKALFRG…YSKSLALPVY (235 aa)) are N-terminal acylcarrier protein transacylase domain (SAT). The Ketosynthase family 3 (KS3) domain occupies 388 to 821 (DSKLAIVGMA…GGNTTLVLED (434 aa)). Active-site for beta-ketoacyl synthase activity residues include C561, H696, and H739. The malonyl-CoA:ACP transacylase (MAT) domain stretch occupies residues 923–1245 (VFTFTGQGAY…KSLCTLHLAG (323 aa)). The interval 1312–1634 (TSLIHQVTEE…RLLMDRFFSP (323 aa)) is product template (PT) domain. The interval 1316–1452 (HQVTEETVDK…GSIKYPADPT (137 aa)) is N-terminal hotdog fold. In terms of domain architecture, PKS/mFAS DH spans 1316–1629 (HQVTEETVDK…FRRVPRLLMD (314 aa)). H1348 serves as the catalytic Proton acceptor; for dehydratase activity. Residues 1482–1629 (KASTLSKPLA…FRRVPRLLMD (148 aa)) are C-terminal hotdog fold. D1540 serves as the catalytic Proton donor; for dehydratase activity. Low complexity predominate over residues 1642–1659 (AAPAPAPAAVPAVKKQPP). A disordered region spans residues 1642 to 1714 (AAPAPAPAAV…TTEQEAPVAD (73 aa)). Residues 1660 to 1681 (TETIQPQAPKTEQKQDQLQLPN) show a composition bias toward polar residues. Over residues 1683-1706 (ASAAPSTANSSSSPSSSGVATPTT) the composition is skewed to low complexity. A Carrier domain is found at 1716–1793 (SAVTGVAGKC…DLTGWLEQYC (78 aa)). S1753 bears the O-(pantetheine 4'-phosphoryl)serine mark.

The cofactor is pantetheine 4'-phosphate.

The enzyme catalyses holo-[ACP] + 9 malonyl-CoA + acetyl-CoA + 9 H(+) = 3-(2,4-dioxopentyl)-3,6,8,9-tetrahydroxy-1-oxo-1,2,3,4-tetrahydroanthracene-2-carboxyl-[ACP] + 9 CO2 + 10 CoA + 2 H2O. Its pathway is secondary metabolite biosynthesis. Functionally, non-reducing polyketide synthase; part of the gene cluster that mediates the biosynthesis of the linear tetracyclic TAN-1612 neuropeptide Y receptor antagonist. The decaketide backbone of TAN-1612 is synthesized by the non-reducing polyketide synthase adaA via condensation of one acetyl-CoA starter unit with 9 malonyl-CoA units. The FAD-dependent monooxygenase adaC then performs hydroxylation at C2 while the polaketide chain is still attached to the NRPKS adaA. The alpha-hydroxylation step at C2 appears to be crucial for the following C18-C1 Claisen cyclization and release of the C9-hydroxyl version of TAN-1612 from the NRPKS adaA, two steps performed by the lactamase-like protein adaB. Finally, the O-methyltransferase adaD performs the C9 O-methylation to complete the biosynthesis of TAN-1612. In Aspergillus niger (strain ATCC MYA-4892 / CBS 513.88 / FGSC A1513), this protein is Non-reducing polyketide synthase adaA.